The following is a 115-amino-acid chain: Non-specific lipid-transfer protein 4.1 (115 aa).

The signal sequence occupies residues 1 to 25 (MARAAASQLVLVALVAAMLLVAADA). Cystine bridges form between Cys29-Cys77, Cys39-Cys54, Cys55-Cys97, and Cys75-Cys111.

This sequence belongs to the plant LTP family.

In terms of biological role, plant non-specific lipid-transfer proteins transfer phospholipids as well as galactolipids across membranes. May play a role in wax or cutin deposition in the cell walls of expanding epidermal cells and certain secretory tissues. The chain is Non-specific lipid-transfer protein 4.1 (LTP4.1) from Hordeum vulgare (Barley).